The following is a 460-amino-acid chain: Chromosomal replication initiator protein DnaA (460 aa).

The segment at M1–A84 is domain I, interacts with DnaA modulators. Residues A84 to S123 form a domain II region. Residues N124–A340 are domain III, AAA+ region. Positions 168, 170, 171, and 172 each coordinate ATP. The segment at N341 to S460 is domain IV, binds dsDNA.

This sequence belongs to the DnaA family. Oligomerizes as a right-handed, spiral filament on DNA at oriC.

The protein localises to the cytoplasm. Its function is as follows. Plays an essential role in the initiation and regulation of chromosomal replication. ATP-DnaA binds to the origin of replication (oriC) to initiate formation of the DNA replication initiation complex once per cell cycle. Binds the DnaA box (a 9 base pair repeat at the origin) and separates the double-stranded (ds)DNA. Forms a right-handed helical filament on oriC DNA; dsDNA binds to the exterior of the filament while single-stranded (ss)DNA is stabiized in the filament's interior. The ATP-DnaA-oriC complex binds and stabilizes one strand of the AT-rich DNA unwinding element (DUE), permitting loading of DNA polymerase. After initiation quickly degrades to an ADP-DnaA complex that is not apt for DNA replication. Binds acidic phospholipids. This is Chromosomal replication initiator protein DnaA from Shewanella sp. (strain MR-7).